The primary structure comprises 635 residues: tRNA 5-methylaminomethyl-2-thiouridine biosynthesis bifunctional protein MnmC (635 aa).

Residues 1-227 (MSEPIDWLPD…KRSNLQAEFD (227 aa)) form a tRNA (mnm(5)s(2)U34)-methyltransferase region. The interval 254-635 (IGGGLSGAAV…ALSTERLPAD (382 aa)) is FAD-dependent cmnm(5)s(2)U34 oxidoreductase.

This sequence in the N-terminal section; belongs to the methyltransferase superfamily. tRNA (mnm(5)s(2)U34)-methyltransferase family. In the C-terminal section; belongs to the DAO family. FAD is required as a cofactor.

The protein localises to the cytoplasm. It catalyses the reaction 5-aminomethyl-2-thiouridine(34) in tRNA + S-adenosyl-L-methionine = 5-methylaminomethyl-2-thiouridine(34) in tRNA + S-adenosyl-L-homocysteine + H(+). In terms of biological role, catalyzes the last two steps in the biosynthesis of 5-methylaminomethyl-2-thiouridine (mnm(5)s(2)U) at the wobble position (U34) in tRNA. Catalyzes the FAD-dependent demodification of cmnm(5)s(2)U34 to nm(5)s(2)U34, followed by the transfer of a methyl group from S-adenosyl-L-methionine to nm(5)s(2)U34, to form mnm(5)s(2)U34. The protein is tRNA 5-methylaminomethyl-2-thiouridine biosynthesis bifunctional protein MnmC of Paracidovorax citrulli (strain AAC00-1) (Acidovorax citrulli).